The following is a 309-amino-acid chain: Ribosomal RNA large subunit methyltransferase F (309 aa).

The interval 1 to 21 (MASQHDKKSVQSGLLHPRNPH) is disordered.

Belongs to the methyltransferase superfamily. METTL16/RlmF family.

It is found in the cytoplasm. It catalyses the reaction adenosine(1618) in 23S rRNA + S-adenosyl-L-methionine = N(6)-methyladenosine(1618) in 23S rRNA + S-adenosyl-L-homocysteine + H(+). Specifically methylates the adenine in position 1618 of 23S rRNA. The chain is Ribosomal RNA large subunit methyltransferase F from Desulfotalea psychrophila (strain LSv54 / DSM 12343).